We begin with the raw amino-acid sequence, 782 residues long: Calcium-independent phospholipase A2-gamma (782 aa).

N-linked (GlcNAc...) asparagine glycosylation occurs at N4. Disordered stretches follow at residues 219–275 and 317–343; these read EKMS…PSAI and SKSQSEEQEEPAKTDQAVSKDRNAEEK. Residues 220 to 248 are compositionally biased toward basic and acidic residues; sequence KMSQQKENEHFRDKSELEDKKVEEGKLRS. N361 carries an N-linked (GlcNAc...) asparagine glycan. Residues 445 to 640 form the PNPLA domain; it reads LSIDGGGTRG…LLNNPSALAM (196 aa). Positions 449–454 match the GXGXXG motif; that stretch reads GGGTRG. A helical membrane pass occupies residues 475–495; the sequence is LFDYICGVSTGAILAFMLGLF. A GXSXG motif is present at residues 481 to 485; that stretch reads GVSTG. S483 functions as the Nucleophile in the catalytic mechanism. The Proton acceptor role is filled by D627. The DGA/G signature appears at 627-629; sequence DGG. Position 736 is an N6-succinyllysine (K736).

In terms of tissue distribution, expressed in parenchymal tissues including heart, skeletal muscle, placenta, brain, liver and pancreas. Also expressed in bronchial epithelial cells and kidney. Highest expression is observed in skeletal muscle and heart.

It localises to the endoplasmic reticulum membrane. It is found in the mitochondrion membrane. The protein resides in the peroxisome membrane. The enzyme catalyses a 1,2-diacyl-sn-glycero-3-phosphocholine + H2O = a 1-acyl-sn-glycero-3-phosphocholine + a fatty acid + H(+). It carries out the reaction a 1,2-diacyl-sn-glycero-3-phosphocholine + H2O = a 2-acyl-sn-glycero-3-phosphocholine + a fatty acid + H(+). The catalysed reaction is a 1,2-diacyl-sn-glycero-3-phosphoethanolamine + H2O = a 1-acyl-sn-glycero-3-phosphoethanolamine + a fatty acid + H(+). It catalyses the reaction a 1-O-(1Z-alkenyl)-2-acyl-sn-glycero-3-phosphocholine + H2O = a 1-O-(1Z-alkenyl)-sn-glycero-3-phosphocholine + a fatty acid + H(+). The enzyme catalyses a 1-acyl-sn-glycero-3-phosphocholine + H2O = sn-glycerol 3-phosphocholine + a fatty acid + H(+). It carries out the reaction 1-acyl-2-(9Z,12Z)-octadecadienoyl-sn-glycero-3-phosphocholine + H2O = a 1-acyl-sn-glycero-3-phosphocholine + (9Z,12Z)-octadecadienoate + H(+). The catalysed reaction is 1-acyl-2-(5Z,8Z,11Z,14Z-eicosatetraenoyl)-sn-glycero-3-phosphocholine + H2O = a 1-acyl-sn-glycero-3-phosphocholine + (5Z,8Z,11Z,14Z)-eicosatetraenoate + H(+). It catalyses the reaction 1-hexadecanoyl-2-(5Z,8Z,11Z,14Z-eicosatetraenoyl)-sn-glycero-3-phosphocholine + H2O = 1-hexadecanoyl-sn-glycero-3-phosphocholine + (5Z,8Z,11Z,14Z)-eicosatetraenoate + H(+). The enzyme catalyses 1-octadecanoyl-2-(9Z-octadecenoyl)-sn-glycero-3-phosphocholine + H2O = 1-octadecanoyl-sn-glycero-3-phosphocholine + (9Z)-octadecenoate + H(+). It carries out the reaction 1-hexadecanoyl-2-(9Z-octadecenoyl)-sn-glycero-3-phosphocholine + H2O = 1-hexadecanoyl-sn-glycero-3-phosphocholine + (9Z)-octadecenoate + H(+). The catalysed reaction is 1-hexadecanoyl-2-(9Z,12Z-octadecadienoyl)-sn-glycero-3-phosphocholine + H2O = (9Z,12Z)-octadecadienoate + 1-hexadecanoyl-sn-glycero-3-phosphocholine + H(+). It catalyses the reaction 1-acyl-2-(9Z,12Z)-octadecadienoyl-sn-glycero-3-phosphoethanolamine + H2O = a 1-acyl-sn-glycero-3-phosphoethanolamine + (9Z,12Z)-octadecadienoate + H(+). The enzyme catalyses 1-acyl-2-(5Z,8Z,11Z,14Z)-eicosatetraenoyl-sn-glycero-3-phosphoethanolamine + H2O = a 1-acyl-sn-glycero-3-phosphoethanolamine + (5Z,8Z,11Z,14Z)-eicosatetraenoate + H(+). It carries out the reaction 1-hexadecanoyl-2-(5Z,8Z,11Z,14Z-eicosatetraenoyl)-sn-glycero-3-phosphoethanolamine + H2O = 1-hexadecanoyl-sn-glycero-3-phosphoethanolamine + (5Z,8Z,11Z,14Z)-eicosatetraenoate + H(+). The catalysed reaction is 1-hexadecanoyl-2-(5Z,8Z,11Z,14Z-eicosatetraenoyl)-sn-glycero-3-phosphocholine + H2O = 2-(5Z,8Z,11Z,14Z)-eicosatetraenoyl-sn-glycero-3-phosphocholine + hexadecanoate + H(+). It catalyses the reaction 1-octadecanoyl-2-(9Z-octadecenoyl)-sn-glycero-3-phosphocholine + H2O = 2-(9Z-octadecenoyl)-sn-glycero-3-phosphocholine + octadecanoate + H(+). The enzyme catalyses 1-hexadecanoyl-2-(4Z,7Z,10Z,13Z,16Z,19Z-docosahexaenoyl)-sn-glycero-3-phosphocholine + H2O = 2-(4Z,7Z,10Z,13Z,16Z,19Z-docosahexaenoyl)-sn-glycero-3-phosphocholine + hexadecanoate + H(+). It carries out the reaction 1-O-(1Z)-hexadecenyl-2 (5Z,8Z,11Z,14Z)-eicosatetraenoyl-sn-glycero-3-phosphocholine + H2O = 1-(1Z-hexadecenyl)-sn-glycero-3-phosphocholine + (5Z,8Z,11Z,14Z)-eicosatetraenoate + H(+). The catalysed reaction is 1-O-(1Z-hexadecenyl)-2-(9Z-octadecenoyl)-sn-glycero-3-phosphocholine + H2O = 1-(1Z-hexadecenyl)-sn-glycero-3-phosphocholine + (9Z)-octadecenoate + H(+). It catalyses the reaction 1-hexadecanoyl-sn-glycero-3-phosphocholine + H2O = sn-glycerol 3-phosphocholine + hexadecanoate + H(+). The enzyme catalyses 1',3'-bis-[1,2-di-(9Z,12Z-octadecadienoyl)-sn-glycero-3-phospho]-glycerol + H2O = 1'-[1,2-di-(9Z,12Z-octadecadienoyl)-sn-glycero-3-phospho]-3'-[1-(9Z,12Z-octadecadienoyl)-sn-glycero-3-phospho]-glycerol + (9Z,12Z)-octadecadienoate + H(+). It carries out the reaction 1'-[1-acyl-2-(9-hydroxy-(10E,12Z)-octadecadienoyl)-sn-glycero-3-phospho]-3'-[1,2-diacyl-sn-glycero-3-phospho]-glycerol + H2O = 9-hydroxy-(10E,12Z)-octadecadienoate + 1'-[1,2-diacyl-sn-glycero-3-phospho],3'-[1-acyl-sn-glycero-3-phospho]-glycerol + H(+). It participates in phospholipid metabolism. Its activity is regulated as follows. Calcium-independent phospholipase. Inhibited by (E)-6-bromomethylene-3-1-naphthalenyl-2H-tetrahydropyran-2-one (BEL). The activity toward 1-hexadecanoyl-2-(5Z,8Z,11Z,14Z-eicosatetraenoyl)-sn-glycero-3-phosphocholine is stimulated by cardiolipin. Its function is as follows. Calcium-independent and membrane-bound phospholipase, that catalyzes the esterolytic cleavage of fatty acids from glycerophospholipids to yield free fatty acids and lysophospholipids, hence regulating membrane physical properties and the release of lipid second messengers and growth factors. Hydrolyzes phosphatidylethanolamine, phosphatidylcholine and probably phosphatidylinositol with a possible preference for the former. Also has a broad substrate specificity in terms of fatty acid moieties, hydrolyzing saturated and mono-unsaturated fatty acids at nearly equal rates from either the sn-1 or sn-2 position in diacyl phosphatidylcholine. However, has a weak activity toward polyunsaturated fatty acids at the sn-2 position, and thereby favors the production of 2-arachidonoyl lysophosphatidylcholine, a key branch point metabolite in eicosanoid signaling. On the other hand, can produce arachidonic acid from the sn-1 position of diacyl phospholipid and from the sn-2 position of arachidonate-containing plasmalogen substrates. Therefore, plays an important role in the mobilization of arachidonic acid in response to cellular stimuli and the generation of lipid second messengers. Can also hydrolyze lysophosphatidylcholine. In the mitochondrial compartment, catalyzes the hydrolysis and release of oxidized aliphatic chains from cardiolipin and integrates mitochondrial bioenergetics and signaling. It is essential for maintaining efficient bioenergetic mitochondrial function through tailoring mitochondrial membrane lipid metabolism and composition. This chain is Calcium-independent phospholipase A2-gamma, found in Homo sapiens (Human).